The sequence spans 47 residues: Large ribosomal subunit protein bL34 (47 aa).

Belongs to the bacterial ribosomal protein bL34 family.

The sequence is that of Large ribosomal subunit protein bL34 from Corynebacterium jeikeium (strain K411).